The chain runs to 978 residues: Serine/threonine-protein kinase PLK4 (978 aa).

Positions 13–266 (FQVLDLLGKG…LSGILDHPFI (254 aa)) constitute a Protein kinase domain. Residues 19-27 (LGKGGFACV) and lysine 42 each bind ATP. Aspartate 137 serves as the catalytic Proton acceptor. Polar residues-rich tracts occupy residues 271–282 (LNTKYSSPTRQH) and 291–304 (SLDSGTGTMATIST). 4 disordered regions span residues 271–381 (LNTK…TRTS), 489–578 (IEQP…AERL), 788–818 (AWKNSSGKSEKQDQQGCSNGQSQPVLPSSPS), and 838–869 (AQTTNPAFPGKSRKTSPSKTSRHKQSPAQPIP). Residues 324 to 335 (RTSDIWPRDPKH) are compositionally biased toward basic and acidic residues. Composition is skewed to polar residues over residues 351–362 (TENVTTGSSSHV) and 371–381 (AQYSGLKTRTS). Basic and acidic residues-rich tracts occupy residues 518-527 (GSDSVSKDFD) and 536-566 (ESRRRQNHRSDSERQTRRAEKSRSGGRDKSL). In terms of domain architecture, Cryptic POLO box 1 (CPB1) spans 565-678 (SLGELTEPLN…AKFVQLVRKL (114 aa)). A Cryptic POLO box 2 (CPB2) domain is found at 679–792 (TPKVTLYSKH…GRRPPAWKNS (114 aa)). Residues 801–818 (QQGCSNGQSQPVLPSSPS) are compositionally biased toward polar residues. Residues 848 to 862 (KSRKTSPSKTSRHKQ) are compositionally biased toward basic residues. The 79-residue stretch at 895–973 (HVCKMAFVDG…LPAVIKTLAT (79 aa)) folds into the POLO box domain.

Belongs to the protein kinase superfamily. Ser/Thr protein kinase family. CDC5/Polo subfamily. As to quaternary structure, homodimer. In terms of processing, ubiquitinated; leading to its degradation by the proteasome.

It is found in the cytoplasm. The protein resides in the cytoskeleton. Its subcellular location is the microtubule organizing center. The protein localises to the centrosome. It localises to the centriole. It carries out the reaction L-seryl-[protein] + ATP = O-phospho-L-seryl-[protein] + ADP + H(+). It catalyses the reaction L-threonyl-[protein] + ATP = O-phospho-L-threonyl-[protein] + ADP + H(+). Functionally, serine/threonine-protein kinase that plays a central role in centriole duplication. Able to trigger procentriole formation on the surface of the mother centriole cylinder, leading to the recruitment of centriole biogenesis proteins. When overexpressed, it is able to induce centrosome amplification through the simultaneous generation of multiple procentrioles adjoining each parental centriole during S phase. This is Serine/threonine-protein kinase PLK4 from Nematostella vectensis (Starlet sea anemone).